The sequence spans 247 residues: Uridylate kinase (247 aa).

An ATP-binding site is contributed by 17–20 (KFSG). UMP is bound at residue G59. The ATP site is built by G60 and R64. UMP-binding positions include D79 and 140 to 147 (TGNPFFTT). T167, Y173, and D176 together coordinate ATP.

The protein belongs to the UMP kinase family. As to quaternary structure, homohexamer.

It is found in the cytoplasm. It carries out the reaction UMP + ATP = UDP + ADP. It participates in pyrimidine metabolism; CTP biosynthesis via de novo pathway; UDP from UMP (UMPK route): step 1/1. Its activity is regulated as follows. Inhibited by UTP. In terms of biological role, catalyzes the reversible phosphorylation of UMP to UDP. The sequence is that of Uridylate kinase from Legionella pneumophila (strain Paris).